Consider the following 467-residue polypeptide: Septin-10 (467 aa).

In terms of domain architecture, Septin-type G spans 63-329 (QGFCFNILCV…ELYRRCKLEE (267 aa)). The segment at 73-80 (GETGIGKS) is G1 motif. GTP is bound by residues 73 to 80 (GETGIGKS), glycine 128, 209 to 217 (KADTVSKTE), glycine 263, and arginine 278. A G3 motif region spans residues 125–128 (NTVG). The tract at residues 208–211 (AKAD) is G4 motif.

The protein belongs to the TRAFAC class TrmE-Era-EngA-EngB-Septin-like GTPase superfamily. Septin GTPase family. Septins polymerize into heterooligomeric protein complexes that form filaments, and can associate with cellular membranes, actin filaments and microtubules. GTPase activity is required for filament formation. Interacts with ADGB. Proteolytically cleaved in vitro in a calmodulin-dependent manner.

It localises to the cytoplasm. The protein resides in the cytoskeleton. The protein localises to the cell projection. It is found in the cilium. Its subcellular location is the flagellum. In terms of biological role, filament-forming cytoskeletal GTPase. May play a role in cytokinesis (Potential). In Pongo abelii (Sumatran orangutan), this protein is Septin-10.